Consider the following 407-residue polypeptide: Methylthioribose kinase (407 aa).

Residues N40, K57, and 111-113 (EDL) contribute to the ATP site. D229 lines the substrate pocket. 246–248 (DAE) is a binding site for ATP. R344 is a binding site for substrate.

It belongs to the methylthioribose kinase family. As to quaternary structure, homodimer.

The enzyme catalyses 5-(methylsulfanyl)-D-ribose + ATP = 5-(methylsulfanyl)-alpha-D-ribose 1-phosphate + ADP + H(+). It functions in the pathway amino-acid biosynthesis; L-methionine biosynthesis via salvage pathway; S-methyl-5-thio-alpha-D-ribose 1-phosphate from S-methyl-5'-thioadenosine (hydrolase route): step 2/2. Catalyzes the phosphorylation of methylthioribose into methylthioribose-1-phosphate. The protein is Methylthioribose kinase of Yersinia pseudotuberculosis serotype IB (strain PB1/+).